Reading from the N-terminus, the 190-residue chain is MPSPVDASSADGGSGLGSHRRKRTTFSKGQLLELERAFAAWPYPNISTHEHLAWVTCLPEAKVQVWFQKRWAKIIKNRKSGILSPGSECPQSSCSLPDTLQQPWDPQMPGQPPPSSGTPQRTSVCRHSSCPAPGLSPRQGWEGAKAVAPWGSAGASEVHPSLERATPQTSLGSLSDLIYALAIVVNVDHS.

Over residues 1–11 (MPSPVDASSAD) the composition is skewed to low complexity. Disordered regions lie at residues 1–24 (MPSP…RKRT) and 82–161 (ILSP…VHPS). Residues 19-78 (HRRKRTTFSKGQLLELERAFAAWPYPNISTHEHLAWVTCLPEAKVQVWFQKRWAKIIKNR) constitute a DNA-binding region (homeobox). The segment covering 89–100 (CPQSSCSLPDTL) has biased composition (polar residues).

This sequence belongs to the paired homeobox family.

The protein resides in the nucleus. Its function is as follows. Probable transcription factor involved in the control of specification of mesoderm and endoderm. The polypeptide is Homeobox protein SEBOX (SEBOX) (Homo sapiens (Human)).